Here is a 280-residue protein sequence, read N- to C-terminus: Large ribosomal subunit protein uL2 (280 aa).

The interval 229-280 (DHPHGGGEGKAPIGHPSPLTPWGKPTLGYKTRKKRKPSDRFIIQRANDKKEK) is disordered.

Belongs to the universal ribosomal protein uL2 family. Part of the 50S ribosomal subunit. Forms a bridge to the 30S subunit in the 70S ribosome.

One of the primary rRNA binding proteins. Required for association of the 30S and 50S subunits to form the 70S ribosome, for tRNA binding and peptide bond formation. It has been suggested to have peptidyltransferase activity; this is somewhat controversial. Makes several contacts with the 16S rRNA in the 70S ribosome. This chain is Large ribosomal subunit protein uL2, found in Dictyoglomus turgidum (strain DSM 6724 / Z-1310).